The sequence spans 145 residues: MDIRQMNKTHLEHWRGLRKQLWPGHPDDAHLADGEEILQADHLASFIAMADGVAIGFADASIRHDYVNGCDSSPVVFLEGIFVLPSFRQRGVAKQLIAAVQRWGTNKGCREMASDTSPENTISQKVHQALGFEETERVIFYRKRC.

Positions 1-145 (MDIRQMNKTH…ERVIFYRKRC (145 aa)) constitute an N-acetyltransferase domain. Residues Trp-22, His-25, Tyr-66, and Glu-79 each coordinate substrate. Residues 81–83 (IFV) and 89–94 (QRGVAK) contribute to the acetyl-CoA site. Asp-115 provides a ligand contact to substrate. Asn-120 is an acetyl-CoA binding site. Glu-136 is a binding site for substrate.

As to quaternary structure, homodimer.

It catalyses the reaction kanamycin B + acetyl-CoA = N(6')-acetylkanamycin B + CoA + H(+). In terms of biological role, catalyzes the transfer of an acetyl group from acetyl-CoA to the 6'-amino group of aminoglycoside molecules conferring resistance to antibiotics containing the purpurosamine ring including amikacin, tobramycin, dibekacin and ribostamycin. Able to acetylate eukaryotic histone proteins. The sequence is that of Aminoglycoside N(6')-acetyltransferase type 1 from Salmonella enteritidis.